A 157-amino-acid polypeptide reads, in one-letter code: Snaclec 3 (157 aa).

The N-terminal stretch at 1–23 (MGRLIFLSFGWLVVFLSLSGTGA) is a signal peptide. Cystine bridges form between C27/C38, C55/C153, and C128/C145. A C-type lectin domain is found at 34–154 (YGQHCYRAFS…CAGHYPFICK (121 aa)).

Belongs to the snaclec family. As to quaternary structure, heterodimer; disulfide-linked. Expressed by the venom gland.

It localises to the secreted. Its function is as follows. Interferes with one step of hemostasis (modulation of platelet aggregation, or coagulation cascade, for example). In Bitis gabonica (Gaboon adder), this protein is Snaclec 3.